The primary structure comprises 437 residues: Glutamate-1-semialdehyde 2,1-aminomutase (437 aa).

An N6-(pyridoxal phosphate)lysine modification is found at K277.

Belongs to the class-III pyridoxal-phosphate-dependent aminotransferase family. HemL subfamily. In terms of assembly, homodimer. Pyridoxal 5'-phosphate is required as a cofactor.

It is found in the cytoplasm. The enzyme catalyses (S)-4-amino-5-oxopentanoate = 5-aminolevulinate. It functions in the pathway porphyrin-containing compound metabolism; protoporphyrin-IX biosynthesis; 5-aminolevulinate from L-glutamyl-tRNA(Glu): step 2/2. The protein operates within porphyrin-containing compound metabolism; chlorophyll biosynthesis. The chain is Glutamate-1-semialdehyde 2,1-aminomutase from Thermosynechococcus vestitus (strain NIES-2133 / IAM M-273 / BP-1).